An 86-amino-acid chain; its full sequence is MNYFVLIAVACLLTAGTESKKDGYPLEYDNCAYDCLGYDNKKCDKLCKDKKADSGYCYWAHILCYCYGLPDNEPIKTSGRCRPGKK.

Positions 1 to 19 (MNYFVLIAVACLLTAGTES) are cleaved as a signal peptide. The region spanning 21-82 (KDGYPLEYDN…EPIKTSGRCR (62 aa)) is the LCN-type CS-alpha/beta domain. Cystine bridges form between Cys-31/Cys-81, Cys-35/Cys-57, Cys-43/Cys-64, and Cys-47/Cys-66. Position 83 is a proline amide (Pro-83).

The protein belongs to the long (4 C-C) scorpion toxin superfamily. Sodium channel inhibitor family. Alpha subfamily. Expressed by the venom gland.

Its subcellular location is the secreted. Alpha toxins bind voltage-independently at site-3 of sodium channels (Nav) and inhibit the inactivation of the activated channels, thereby blocking neuronal transmission. In Tityus pachyurus (Colombian scorpion), this protein is Toxin Tpa4.